The sequence spans 380 residues: 3-dehydroquinate synthase (380 aa).

It belongs to the archaeal-type DHQ synthase family.

The catalysed reaction is 2-amino-2,3,7-trideoxy-D-lyxo-hept-6-ulosonate + NAD(+) + H2O = 3-dehydroquinate + NH4(+) + NADH + H(+). Its function is as follows. Catalyzes the oxidative deamination and cyclization of 2-amino-3,7-dideoxy-D-threo-hept-6-ulosonic acid (ADH) to yield 3-dehydroquinate (DHQ), which is fed into the canonical shikimic pathway of aromatic amino acid biosynthesis. The sequence is that of 3-dehydroquinate synthase from Methanosarcina acetivorans (strain ATCC 35395 / DSM 2834 / JCM 12185 / C2A).